The sequence spans 152 residues: Protein SprT-like (152 aa).

The SprT-like domain maps to 7 to 148 (QRLVEEVSLQ…GKCKGKLNLI (142 aa)). Position 67 (His67) interacts with Zn(2+). Residue Glu68 is part of the active site. Residue His71 coordinates Zn(2+).

The protein belongs to the SprT family. Requires Zn(2+) as cofactor.

It localises to the cytoplasm. In Bacillus anthracis (strain A0248), this protein is Protein SprT-like.